The chain runs to 180 residues: Large ribosomal subunit protein uL5c (180 aa).

The protein belongs to the universal ribosomal protein uL5 family. As to quaternary structure, part of the 50S ribosomal subunit; contacts the 5S rRNA.

It localises to the plastid. The protein resides in the chloroplast. Its function is as follows. Binds 5S rRNA, forms part of the central protuberance of the 50S subunit. The chain is Large ribosomal subunit protein uL5c (rpl5) from Oedogonium cardiacum (Filamentous green alga).